We begin with the raw amino-acid sequence, 201 residues long: Holliday junction branch migration complex subunit RuvA (201 aa).

The interval 1–61 is domain I; the sequence is MIEFVKGTID…EDAFSLYGFS (61 aa). The domain II stretch occupies residues 62 to 140; it reads TREEKALFTK…DVVPEMIDNL (79 aa). Positions 141–150 are flexible linker; it reads FNHEARIEKQ. The tract at residues 151–201 is domain III; sequence EAETALDEALEALRVLGYAEKEIKKVLPHLKEETALSTDQYVKKALQKLLK.

This sequence belongs to the RuvA family. As to quaternary structure, homotetramer. Forms an RuvA(8)-RuvB(12)-Holliday junction (HJ) complex. HJ DNA is sandwiched between 2 RuvA tetramers; dsDNA enters through RuvA and exits via RuvB. An RuvB hexamer assembles on each DNA strand where it exits the tetramer. Each RuvB hexamer is contacted by two RuvA subunits (via domain III) on 2 adjacent RuvB subunits; this complex drives branch migration. In the full resolvosome a probable DNA-RuvA(4)-RuvB(12)-RuvC(2) complex forms which resolves the HJ.

It localises to the cytoplasm. In terms of biological role, the RuvA-RuvB-RuvC complex processes Holliday junction (HJ) DNA during genetic recombination and DNA repair, while the RuvA-RuvB complex plays an important role in the rescue of blocked DNA replication forks via replication fork reversal (RFR). RuvA specifically binds to HJ cruciform DNA, conferring on it an open structure. The RuvB hexamer acts as an ATP-dependent pump, pulling dsDNA into and through the RuvAB complex. HJ branch migration allows RuvC to scan DNA until it finds its consensus sequence, where it cleaves and resolves the cruciform DNA. This Bacillus velezensis (strain DSM 23117 / BGSC 10A6 / LMG 26770 / FZB42) (Bacillus amyloliquefaciens subsp. plantarum) protein is Holliday junction branch migration complex subunit RuvA.